The sequence spans 260 residues: Snake venom serine protease KN6 (260 aa).

The first 18 residues, 1–18, serve as a signal peptide directing secretion; that stretch reads MVLIRVLANLLILQLSYA. The propeptide occupies 19–24; the sequence is QKSSEL. Positions 25-251 constitute a Peptidase S1 domain; sequence VIGGDECNIN…HLDWIQSIIA (227 aa). 5 cysteine pairs are disulfide-bonded: Cys31–Cys165, Cys100–Cys258, Cys144–Cys212, Cys176–Cys191, and Cys202–Cys227. The Charge relay system role is filled by His67. The N-linked (GlcNAc...) asparagine glycan is linked to Asn105. Catalysis depends on Asp112, which acts as the Charge relay system. A glycan (N-linked (GlcNAc...) asparagine) is linked at Asn172. The Charge relay system role is filled by Ser206. N-linked (GlcNAc...) asparagine glycosylation is found at Asn213 and Asn255.

This sequence belongs to the peptidase S1 family. Snake venom subfamily. As to quaternary structure, monomer. Expressed by the venom gland.

The protein localises to the secreted. Snake venom serine protease that may act in the hemostasis system of the prey. This Trimeresurus stejnegeri (Chinese green tree viper) protein is Snake venom serine protease KN6.